A 319-amino-acid chain; its full sequence is Taste receptor type 2 member 39 (319 aa).

Residues 1–16 (MAQPSNYWKQDLLPLS) lie on the Extracellular side of the membrane. A helical membrane pass occupies residues 17–37 (ILILTLVATECTIGIIASGII). The Cytoplasmic segment spans residues 38-56 (TVVNAVSWVQKRAVSITTR). A helical transmembrane segment spans residues 57 to 77 (ILLLLSVSRIGLQSIILIEMT). Residues 78–97 (SSIFNFSSYNSVLYRVSRVS) are Extracellular-facing. N-linked (GlcNAc...) asparagine glycosylation occurs at N82. A helical transmembrane segment spans residues 98-118 (FVFLNYCSLWFAALLSFFHFV). Residues 119-137 (KIANFSYPLFFKLKWRISE) lie on the Cytoplasmic side of the membrane. A helical membrane pass occupies residues 138–158 (LMPWLLWLSVFISFSSSMFFC). Residues 159 to 187 (NHKYTVYNNISLSSNICNFTMELYVAEAN) are Extracellular-facing. N-linked (GlcNAc...) asparagine glycosylation is found at N167 and N176. The helical transmembrane segment at 188–208 (VVNVAFLFSFGILPPLTMFIA) threads the bilayer. Residues 209 to 247 (TATLLIFSLRRHTLHMRNGDADSRNPRVEAHKQAIKETS) are Cytoplasmic-facing. The chain crosses the membrane as a helical span at residues 248–268 (CFLFLYILYAAVLFLSTSNIA). At 269 to 273 (DASLF) the chain is on the extracellular side. Residues 274-294 (WSSVLRISLPVYPAGHSVLLI) traverse the membrane as a helical segment. The Cytoplasmic portion of the chain corresponds to 295–319 (QSNPGLKRTWKQLLSQIHLHLQSRY).

It belongs to the G-protein coupled receptor T2R family.

It localises to the membrane. In terms of biological role, putative taste receptor which may play a role in the perception of bitterness. The chain is Taste receptor type 2 member 39 from Rattus norvegicus (Rat).